The sequence spans 197 residues: Probable GTP-binding protein EngB (197 aa).

Positions 25-197 (SAPEIAFAGR…VRDEFFKFTR (173 aa)) constitute an EngB-type G domain. GTP contacts are provided by residues 33–40 (GRSNVGKS), 60–64 (GCTRQ), 79–82 (DLPG), 146–149 (TKID), and 177–179 (MSI). The Mg(2+) site is built by Ser-40 and Thr-62.

Belongs to the TRAFAC class TrmE-Era-EngA-EngB-Septin-like GTPase superfamily. EngB GTPase family. The cofactor is Mg(2+).

Necessary for normal cell division and for the maintenance of normal septation. The protein is Probable GTP-binding protein EngB of Wolbachia pipientis wMel.